The primary structure comprises 305 residues: Lysosomal thioesterase PPT2 (305 aa).

The first 32 residues, M1 to P32, serve as a signal peptide directing secretion. Intrachain disulfides connect C112/C120 and C168/C179. S114 functions as the Nucleophile in the catalytic mechanism. N193 carries an N-linked (GlcNAc...) asparagine glycan. Active-site residues include D231 and H286. Cysteines 279 and 299 form a disulfide.

This sequence belongs to the palmitoyl-protein thioesterase family.

The protein resides in the lysosome. It catalyses the reaction hexadecanoyl-CoA + H2O = hexadecanoate + CoA + H(+). It carries out the reaction S-hexadecanoyl-N-acetylcysteamine + H2O = N-acetylcysteamine + hexadecanoate + H(+). In terms of biological role, catalyzes the cleavage of thioester bonds from S-palmitoyl-CoA or S-palmitoyl-N-acetylcysteamine (unbranched structures) but does not have activity against palmitoylcysteine or palmitoylated proteins, branched structures or bulky head groups. Conversely, hydrolyzes both long and short chain fatty acyl-CoA substrate. This Bos taurus (Bovine) protein is Lysosomal thioesterase PPT2 (PPT2).